Here is a 513-residue protein sequence, read N- to C-terminus: 2,3-bisphosphoglycerate-independent phosphoglycerate mutase (513 aa).

Mn(2+)-binding residues include aspartate 12 and serine 62. The Phosphoserine intermediate role is filled by serine 62. Residues histidine 123, 153–154 (RD), arginine 185, arginine 191, 261–264 (RSDR), and lysine 335 each bind substrate. The Mn(2+) site is built by aspartate 402, histidine 406, aspartate 443, histidine 444, and histidine 462.

The protein belongs to the BPG-independent phosphoglycerate mutase family. As to quaternary structure, monomer. Requires Mn(2+) as cofactor.

The enzyme catalyses (2R)-2-phosphoglycerate = (2R)-3-phosphoglycerate. It functions in the pathway carbohydrate degradation; glycolysis; pyruvate from D-glyceraldehyde 3-phosphate: step 3/5. Functionally, catalyzes the interconversion of 2-phosphoglycerate and 3-phosphoglycerate. The protein is 2,3-bisphosphoglycerate-independent phosphoglycerate mutase of Thiobacillus denitrificans (strain ATCC 25259 / T1).